The following is a 272-amino-acid chain: 3-methyl-2-oxobutanoate hydroxymethyltransferase (272 aa).

2 residues coordinate Mg(2+): Asp42 and Asp86. 3-methyl-2-oxobutanoate-binding positions include 42-43 (DS), Asp86, and Lys116. Mg(2+) is bound at residue Glu118. Glu185 functions as the Proton acceptor in the catalytic mechanism.

This sequence belongs to the PanB family. As to quaternary structure, homodecamer; pentamer of dimers. Mg(2+) is required as a cofactor.

The protein resides in the cytoplasm. The catalysed reaction is 3-methyl-2-oxobutanoate + (6R)-5,10-methylene-5,6,7,8-tetrahydrofolate + H2O = 2-dehydropantoate + (6S)-5,6,7,8-tetrahydrofolate. It functions in the pathway cofactor biosynthesis; (R)-pantothenate biosynthesis; (R)-pantoate from 3-methyl-2-oxobutanoate: step 1/2. Its function is as follows. Catalyzes the reversible reaction in which hydroxymethyl group from 5,10-methylenetetrahydrofolate is transferred onto alpha-ketoisovalerate to form ketopantoate. This is 3-methyl-2-oxobutanoate hydroxymethyltransferase from Prochlorococcus marinus (strain NATL1A).